A 120-amino-acid polypeptide reads, in one-letter code: Aspartate 1-decarboxylase (120 aa).

Ser-25 serves as the catalytic Schiff-base intermediate with substrate; via pyruvic acid. Residue Ser-25 is modified to Pyruvic acid (Ser). Thr-57 is a substrate binding site. Tyr-58 serves as the catalytic Proton donor. 73–75 (GAA) lines the substrate pocket.

This sequence belongs to the PanD family. As to quaternary structure, heterooctamer of four alpha and four beta subunits. The cofactor is pyruvate. Is synthesized initially as an inactive proenzyme, which is activated by self-cleavage at a specific serine bond to produce a beta-subunit with a hydroxyl group at its C-terminus and an alpha-subunit with a pyruvoyl group at its N-terminus.

It is found in the cytoplasm. It carries out the reaction L-aspartate + H(+) = beta-alanine + CO2. Its pathway is cofactor biosynthesis; (R)-pantothenate biosynthesis; beta-alanine from L-aspartate: step 1/1. Catalyzes the pyruvoyl-dependent decarboxylation of aspartate to produce beta-alanine. This Thermosipho africanus (strain TCF52B) protein is Aspartate 1-decarboxylase.